Reading from the N-terminus, the 584-residue chain is Actin-binding protein IPP (584 aa).

The BTB domain maps to 37 to 104 (CDVQLQVGQE…IYTGIVNIGV (68 aa)). 6 Kelch repeats span residues 289 to 343 (YLYA…VLGG), 344 to 390 (MVYA…VCYG), 391 to 437 (AIYA…EMQG), 439 to 485 (IYVI…ALND), 487 to 533 (IYSV…AVNG), and 535 to 583 (LYVS…GVAV).

The protein resides in the cytoplasm. The protein localises to the cytoskeleton. May play a role in organizing the actin cytoskeleton. This Homo sapiens (Human) protein is Actin-binding protein IPP (IPP).